The chain runs to 86 residues: Large ribosomal subunit protein bL31B (86 aa).

Belongs to the bacterial ribosomal protein bL31 family. Type B subfamily. Part of the 50S ribosomal subunit.

The sequence is that of Large ribosomal subunit protein bL31B from Streptococcus agalactiae serotype Ia (strain ATCC 27591 / A909 / CDC SS700).